Here is a 201-residue protein sequence, read N- to C-terminus: Probable GTP-binding protein EngB (201 aa).

Residues 22–195 enclose the EngB-type G domain; that stretch reads TQPEFAFAGK…WRCIEQFLEV (174 aa). GTP-binding positions include 30 to 37, 57 to 61, 75 to 78, 142 to 145, and 174 to 176; these read GKSNVGKS, GKTQT, DLPG, TKLD, and FSS. Residues S37 and T59 each contribute to the Mg(2+) site.

The protein belongs to the TRAFAC class TrmE-Era-EngA-EngB-Septin-like GTPase superfamily. EngB GTPase family. Requires Mg(2+) as cofactor.

Necessary for normal cell division and for the maintenance of normal septation. The polypeptide is Probable GTP-binding protein EngB (Lachnoclostridium phytofermentans (strain ATCC 700394 / DSM 18823 / ISDg) (Clostridium phytofermentans)).